The primary structure comprises 413 residues: Serine hydroxymethyltransferase (413 aa).

(6S)-5,6,7,8-tetrahydrofolate-binding positions include Leu119 and 123–125; that span reads GHL. At Lys228 the chain carries N6-(pyridoxal phosphate)lysine. Glu243 serves as a coordination point for (6S)-5,6,7,8-tetrahydrofolate.

Belongs to the SHMT family. As to quaternary structure, homodimer. Requires pyridoxal 5'-phosphate as cofactor.

Its subcellular location is the cytoplasm. The enzyme catalyses (6R)-5,10-methylene-5,6,7,8-tetrahydrofolate + glycine + H2O = (6S)-5,6,7,8-tetrahydrofolate + L-serine. It functions in the pathway one-carbon metabolism; tetrahydrofolate interconversion. The protein operates within amino-acid biosynthesis; glycine biosynthesis; glycine from L-serine: step 1/1. In terms of biological role, catalyzes the reversible interconversion of serine and glycine with tetrahydrofolate (THF) serving as the one-carbon carrier. This reaction serves as the major source of one-carbon groups required for the biosynthesis of purines, thymidylate, methionine, and other important biomolecules. Also exhibits THF-independent aldolase activity toward beta-hydroxyamino acids, producing glycine and aldehydes, via a retro-aldol mechanism. The polypeptide is Serine hydroxymethyltransferase (Thermoanaerobacter pseudethanolicus (strain ATCC 33223 / 39E) (Clostridium thermohydrosulfuricum)).